We begin with the raw amino-acid sequence, 497 residues long: Probable cytosol aminopeptidase (497 aa).

The Mn(2+) site is built by Lys263 and Asp268. The active site involves Lys275. 3 residues coordinate Mn(2+): Asp286, Asp345, and Glu347. Arg349 is a catalytic residue.

The protein belongs to the peptidase M17 family. Mn(2+) serves as cofactor.

It is found in the cytoplasm. The enzyme catalyses Release of an N-terminal amino acid, Xaa-|-Yaa-, in which Xaa is preferably Leu, but may be other amino acids including Pro although not Arg or Lys, and Yaa may be Pro. Amino acid amides and methyl esters are also readily hydrolyzed, but rates on arylamides are exceedingly low.. It catalyses the reaction Release of an N-terminal amino acid, preferentially leucine, but not glutamic or aspartic acids.. In terms of biological role, presumably involved in the processing and regular turnover of intracellular proteins. Catalyzes the removal of unsubstituted N-terminal amino acids from various peptides. The sequence is that of Probable cytosol aminopeptidase from Sinorhizobium fredii (strain NBRC 101917 / NGR234).